The following is a 91-amino-acid chain: LYR motif-containing protein 4 (91 aa).

Pantetheine 4'-phosphate contacts are provided by R6 and K44. Position 47 is an N6-succinyllysine (K47).

It belongs to the complex I LYR family. In terms of assembly, homodimer. Component of the mitochondrial core iron-sulfur cluster (ISC) complex composed of NFS1, LYRM4, NDUFAB1, ISCU, FXN, and FDX2; this complex is a heterohexamer containing two copies of each monomer. Component of the cyteine desulfurase complex composed of NFS1, LYRM4 and NDUFAB1; this complex contributes to the stability and cysteine desulfurase activity of NFS1. Interacts with FXN; this interaction is nickel-dependent. Interacts with the cytoplasmic form of NFS1; the complex increases the stability of NFS1. Forms a complex with the cytoplasmic form of NFS1; this complex increases the stability and cysteine desulfurase activity of NFS1. Interacts with NFS1.

It is found in the mitochondrion. Its subcellular location is the nucleus. The protein operates within cofactor biosynthesis; iron-sulfur cluster biosynthesis. Functionally, stabilizing factor, of the core iron-sulfur cluster (ISC) assembly complex, that regulates, in association with NDUFAB1, the stability and the cysteine desulfurase activity of NFS1 and participates in the [2Fe-2S] clusters assembly on the scaffolding protein ISCU. The core iron-sulfur cluster (ISC) assembly complex is involved in the de novo synthesis of a [2Fe-2S] cluster, the first step of the mitochondrial iron-sulfur protein biogenesis. This process is initiated by the cysteine desulfurase complex (NFS1:LYRM4:NDUFAB1) that produces persulfide which is delivered on the scaffold protein ISCU in a FXN-dependent manner. Then this complex is stabilized by FDX2 which provides reducing equivalents to accomplish the [2Fe-2S] cluster assembly. Finally, the [2Fe-2S] cluster is transferred from ISCU to chaperone proteins, including HSCB, HSPA9 and GLRX5. May also participates in the iron-sulfur protein biogenesis in the cytoplasm through its interaction with the cytoplasmic form of NFS1. This chain is LYR motif-containing protein 4, found in Bos taurus (Bovine).